The sequence spans 456 residues: UDP-N-acetylglucosamine 1-carboxyvinyltransferase (456 aa).

34–35 (KN) is a binding site for phosphoenolpyruvate. UDP-N-acetyl-alpha-D-glucosamine is bound at residue Arg104. Cys128 (proton donor) is an active-site residue. At Cys128 the chain carries 2-(S-cysteinyl)pyruvic acid O-phosphothioketal. Residues Asp319 and Ile341 each contribute to the UDP-N-acetyl-alpha-D-glucosamine site.

This sequence belongs to the EPSP synthase family. MurA subfamily.

It localises to the cytoplasm. It catalyses the reaction phosphoenolpyruvate + UDP-N-acetyl-alpha-D-glucosamine = UDP-N-acetyl-3-O-(1-carboxyvinyl)-alpha-D-glucosamine + phosphate. It functions in the pathway cell wall biogenesis; peptidoglycan biosynthesis. Functionally, cell wall formation. Adds enolpyruvyl to UDP-N-acetylglucosamine. This is UDP-N-acetylglucosamine 1-carboxyvinyltransferase from Prochlorococcus marinus (strain AS9601).